The sequence spans 503 residues: Maturase K (503 aa).

It belongs to the intron maturase 2 family. MatK subfamily.

Its subcellular location is the plastid. The protein localises to the chloroplast. In terms of biological role, usually encoded in the trnK tRNA gene intron. Probably assists in splicing its own and other chloroplast group II introns. The protein is Maturase K of Rosa californica (California wild rose).